A 180-amino-acid polypeptide reads, in one-letter code: ATP-dependent protease subunit HslV (180 aa).

Residue threonine 8 is part of the active site. Alanine 165, cysteine 168, and threonine 171 together coordinate Na(+).

This sequence belongs to the peptidase T1B family. HslV subfamily. In terms of assembly, a double ring-shaped homohexamer of HslV is capped on each side by a ring-shaped HslU homohexamer. The assembly of the HslU/HslV complex is dependent on binding of ATP.

The protein localises to the cytoplasm. It carries out the reaction ATP-dependent cleavage of peptide bonds with broad specificity.. Its activity is regulated as follows. Allosterically activated by HslU binding. Its function is as follows. Protease subunit of a proteasome-like degradation complex believed to be a general protein degrading machinery. This chain is ATP-dependent protease subunit HslV, found in Macrococcus caseolyticus (strain JCSC5402) (Macrococcoides caseolyticum).